Here is a 207-residue protein sequence, read N- to C-terminus: Ribosomal RNA large subunit methyltransferase E (207 aa).

S-adenosyl-L-methionine contacts are provided by Gly56, Trp58, Asp76, Asp94, and Asp116. Lys156 serves as the catalytic Proton acceptor.

This sequence belongs to the class I-like SAM-binding methyltransferase superfamily. RNA methyltransferase RlmE family.

The protein resides in the cytoplasm. The enzyme catalyses uridine(2552) in 23S rRNA + S-adenosyl-L-methionine = 2'-O-methyluridine(2552) in 23S rRNA + S-adenosyl-L-homocysteine + H(+). Functionally, specifically methylates the uridine in position 2552 of 23S rRNA at the 2'-O position of the ribose in the fully assembled 50S ribosomal subunit. The polypeptide is Ribosomal RNA large subunit methyltransferase E (Desulfatibacillum aliphaticivorans).